Reading from the N-terminus, the 279-residue chain is Phosphatidylglycerol--prolipoprotein diacylglyceryl transferase (279 aa).

The next 3 helical transmembrane spans lie at 18–38 (LSVR…YFVA), 55–75 (IIFY…VIFQ), and 89–109 (IWHG…AGVI). Arg-137 contacts a 1,2-diacyl-sn-glycero-3-phospho-(1'-sn-glycerol). 2 helical membrane passes run 203–223 (LGET…FIEG) and 235–255 (IRVA…LIVY).

It belongs to the Lgt family.

It is found in the cell membrane. The catalysed reaction is L-cysteinyl-[prolipoprotein] + a 1,2-diacyl-sn-glycero-3-phospho-(1'-sn-glycerol) = an S-1,2-diacyl-sn-glyceryl-L-cysteinyl-[prolipoprotein] + sn-glycerol 1-phosphate + H(+). It participates in protein modification; lipoprotein biosynthesis (diacylglyceryl transfer). Catalyzes the transfer of the diacylglyceryl group from phosphatidylglycerol to the sulfhydryl group of the N-terminal cysteine of a prolipoprotein, the first step in the formation of mature lipoproteins. This is Phosphatidylglycerol--prolipoprotein diacylglyceryl transferase from Staphylococcus aureus (strain USA300).